The primary structure comprises 631 residues: Polyadenylate-binding protein, cytoplasmic and nuclear (631 aa).

Positions 1–56 are disordered; the sequence is MSDLQESLEKLSINEKAPQAPADDATPSNTTTLEKESSESAAAAAGEGAGEEGEEA. RRM domains lie at 58–136, 146–223, 239–316, and 342–419; these read ASLY…WSQR, GNIF…KHVS, TNVY…RAQK, and VNLF…LAQR. Residues 518-545 form a disordered region; that stretch reads GGEFNGPNGQRQQRGAYPPNRNQKGGRP. Residues 545–626 enclose the PABC domain; the sequence is PQRDLAAIIS…ALTAFEEYKK (82 aa).

This sequence belongs to the polyadenylate-binding protein type-1 family.

It is found in the cytoplasm. The protein localises to the nucleus. In terms of biological role, binds the poly(A) tail of mRNA. Appears to be an important mediator of the multiple roles of the poly(A) tail in mRNA biogenesis, stability and translation. In the nucleus, involved in both mRNA cleavage and polyadenylation. Is also required for efficient mRNA export to the cytoplasm. Acts in concert with a poly(A)-specific nuclease (PAN) to affect poly(A) tail shortening, which may occur concomitantly with either nucleocytoplasmic mRNA transport or translational initiation. In the cytoplasm, stimulates translation initiation and regulates mRNA decay through translation termination-coupled poly(A) shortening, probably mediated by PAN. This Meyerozyma guilliermondii (strain ATCC 6260 / CBS 566 / DSM 6381 / JCM 1539 / NBRC 10279 / NRRL Y-324) (Yeast) protein is Polyadenylate-binding protein, cytoplasmic and nuclear (PAB1).